We begin with the raw amino-acid sequence, 471 residues long: ATP synthase subunit beta (471 aa).

156-163 serves as a coordination point for ATP; that stretch reads GGAGVGKT.

This sequence belongs to the ATPase alpha/beta chains family. F-type ATPases have 2 components, CF(1) - the catalytic core - and CF(0) - the membrane proton channel. CF(1) has five subunits: alpha(3), beta(3), gamma(1), delta(1), epsilon(1). CF(0) has three main subunits: a(1), b(2) and c(9-12). The alpha and beta chains form an alternating ring which encloses part of the gamma chain. CF(1) is attached to CF(0) by a central stalk formed by the gamma and epsilon chains, while a peripheral stalk is formed by the delta and b chains.

It localises to the cell membrane. The enzyme catalyses ATP + H2O + 4 H(+)(in) = ADP + phosphate + 5 H(+)(out). In terms of biological role, produces ATP from ADP in the presence of a proton gradient across the membrane. The catalytic sites are hosted primarily by the beta subunits. This Staphylococcus carnosus (strain TM300) protein is ATP synthase subunit beta.